A 353-amino-acid chain; its full sequence is N-formyl peptide receptor 3 (353 aa).

Topologically, residues 1-27 (METNFSIPLNETEEVLPEPAGHTVLWI) are extracellular. N-linked (GlcNAc...) asparagine glycans are attached at residues Asn4 and Asn10. The helical transmembrane segment at 28 to 50 (FSLLVHGVTFVFGVLGNGLVIWV) threads the bilayer. The Cytoplasmic segment spans residues 51-61 (AGFRMTRTVNT). Residues 62–83 (ICYLNLALADFSFSAILPFRMV) form a helical membrane-spanning segment. Over 84–100 (SVAMREKWPFGSFLCKL) the chain is Extracellular. A disulfide bridge connects residues Cys98 and Cys176. A helical membrane pass occupies residues 101–121 (VHVMIDINLFVSVYLITIIAL). Residues 122–140 (DRCICVLHPAWAQNHRTMS) are Cytoplasmic-facing. The helical transmembrane segment at 141–162 (LAKRVMTGLWIFTIVLTLPNFI) threads the bilayer. The Extracellular segment spans residues 163–205 (FWTTISTTNGDTYCIFNFAFWGDTAVERLNVFITMAKVFLILH). A helical membrane pass occupies residues 206–226 (FIIGFSVPMSIITVCYGIIAA). The Cytoplasmic portion of the chain corresponds to 227 to 242 (KIHRNHMIKSSRPLRV). A helical transmembrane segment spans residues 243–266 (FAAVVASFFICWFPYELIGILMAV). Over 267-286 (WLKEMLLNGKYKIILVLINP) the chain is Extracellular. The chain crosses the membrane as a helical span at residues 287-306 (TSSLAFFNSCLNPILYVFMG). The Cytoplasmic segment spans residues 307 to 353 (RNFQERLIRSLPTSLERALTEVPDSAQTSNTDTTSASPPEETELQAM). Positions 327 to 353 (EVPDSAQTSNTDTTSASPPEETELQAM) are disordered. Over residues 331–343 (SAQTSNTDTTSAS) the composition is skewed to polar residues.

It belongs to the G-protein coupled receptor 1 family. As to expression, detected in various tissues with highest expression in lung.

It is found in the cell membrane. In terms of biological role, low affinity receptor for N-formyl-methionyl peptides, which are powerful neutrophils chemotactic factors. Binding of FMLP to the receptor causes activation of neutrophils. This response is mediated via a G-protein that activates a phosphatidylinositol-calcium second messenger system. Acts as a receptor for humanin. In Homo sapiens (Human), this protein is N-formyl peptide receptor 3 (FPR3).